The sequence spans 124 residues: MAKLTKELFISALKEMSLLEIKELLDGLKEEFGIDPNALAVASAGPSNAPEAEEKTEFTVVMKNFGKNRLPVIKVIREITGLGLLDADKFIKVPDQKVKENVSKALAEDIKAKLEQAGAVIELQ.

It belongs to the bacterial ribosomal protein bL12 family. In terms of assembly, homodimer. Part of the ribosomal stalk of the 50S ribosomal subunit. Forms a multimeric L10(L12)X complex, where L10 forms an elongated spine to which 2 to 4 L12 dimers bind in a sequential fashion. Binds GTP-bound translation factors.

Functionally, forms part of the ribosomal stalk which helps the ribosome interact with GTP-bound translation factors. Is thus essential for accurate translation. This is Large ribosomal subunit protein bL12 from Phytoplasma australiense.